The sequence spans 367 residues: DNA-directed RNA polymerase II subunit GRINL1A (367 aa).

The stretch at 15–40 (DLERRSLAELREMLKRQERLLRNEKF) forms a coiled coil. An important for transcription repressor activity region spans residues 29–68 (KRQERLLRNEKFICKLPDKGKKIFDSFAKLKAAIAECEEV). Composition is skewed to polar residues over residues 117 to 131 (SVDN…QNQG), 176 to 185 (RVSSQAEDTS), and 205 to 225 (GEQQ…SGTQ). 3 disordered regions span residues 117–185 (SVDN…EDTS), 203–225 (DQGE…SGTQ), and 254–281 (PFRQ…RRDK). The interaction with Pol II stretch occupies residues 226–297 (KKPHYMEVLE…TAARLLPLHH (72 aa)). At Ser-269 the chain carries Phosphoserine. Residues 298–313 (MPTQLLSIEESLALQK) form an important for transcription repressor activity region. Residues 300–329 (TQLLSIEESLALQKQRKQKYEEMQAKLAAQ) are a coiled coil. Residues 314–339 (QRKQKYEEMQAKLAAQKLAERLNIKM) are interaction with Pol II. Residues 335 to 367 (LNIKMRSYNPEGESSGRYREVRDEDDDWSSDEF) form a disordered region. The segment covering 357-367 (DEDDDWSSDEF) has biased composition (acidic residues).

This sequence belongs to the GRINL1 family. Component of the Pol II(G) complex, which contains the RNA polymerase II (Pol II) core complex subunits and POLR2M isoform 1. Pol II(G) appears to be an abundant form of Pol II. Dephosphorylated at Ser-269 by the PNUTS-PP1 complex, promoting RNA polymerase II transcription pause-release.

It is found in the nucleus. Its function is as follows. Appears to be a stable component of the Pol II(G) complex form of RNA polymerase II (Pol II). Pol II synthesizes mRNA precursors and many functional non-coding RNAs and is the central component of the basal RNA polymerase II transcription machinery. May play a role in the Mediator complex-dependent regulation of transcription activation. Acts as a negative regulator of transcriptional activation; this repression is relieved by the Mediator complex, which restores Pol II(G) activator-dependent transcription to a level equivalent to that of Pol II. The sequence is that of DNA-directed RNA polymerase II subunit GRINL1A (POLR2M) from Pongo abelii (Sumatran orangutan).